The sequence spans 473 residues: ATP synthase subunit beta (473 aa).

158–165 (GGAGVGKT) contacts ATP.

The protein belongs to the ATPase alpha/beta chains family. In terms of assembly, F-type ATPases have 2 components, CF(1) - the catalytic core - and CF(0) - the membrane proton channel. CF(1) has five subunits: alpha(3), beta(3), gamma(1), delta(1), epsilon(1). CF(0) has three main subunits: a(1), b(2) and c(9-12). The alpha and beta chains form an alternating ring which encloses part of the gamma chain. CF(1) is attached to CF(0) by a central stalk formed by the gamma and epsilon chains, while a peripheral stalk is formed by the delta and b chains.

It localises to the cell membrane. It carries out the reaction ATP + H2O + 4 H(+)(in) = ADP + phosphate + 5 H(+)(out). Its function is as follows. Produces ATP from ADP in the presence of a proton gradient across the membrane. The catalytic sites are hosted primarily by the beta subunits. This chain is ATP synthase subunit beta, found in Priestia megaterium (strain ATCC 12872 / QMB1551) (Bacillus megaterium).